Here is a 341-residue protein sequence, read N- to C-terminus: Ketol-acid reductoisomerase (NADP(+)) (341 aa).

The KARI N-terminal Rossmann domain occupies 1–182 (MTEMFYDDDA…GGTRAGVIKT (182 aa)). NADP(+) is bound by residues 25-28 (YGSQ), K48, S51, S53, and 83-86 (DQHQ). The active site involves H108. An NADP(+)-binding site is contributed by G134. The 146-residue stretch at 183 to 328 (TFTEETETDL…RELRSLFSWQ (146 aa)) folds into the KARI C-terminal knotted domain. Positions 191, 195, 227, and 231 each coordinate Mg(2+). S252 contacts substrate.

The protein belongs to the ketol-acid reductoisomerase family. The cofactor is Mg(2+).

It catalyses the reaction (2R)-2,3-dihydroxy-3-methylbutanoate + NADP(+) = (2S)-2-acetolactate + NADPH + H(+). The enzyme catalyses (2R,3R)-2,3-dihydroxy-3-methylpentanoate + NADP(+) = (S)-2-ethyl-2-hydroxy-3-oxobutanoate + NADPH + H(+). The protein operates within amino-acid biosynthesis; L-isoleucine biosynthesis; L-isoleucine from 2-oxobutanoate: step 2/4. Its pathway is amino-acid biosynthesis; L-valine biosynthesis; L-valine from pyruvate: step 2/4. Its function is as follows. Involved in the biosynthesis of branched-chain amino acids (BCAA). Catalyzes an alkyl-migration followed by a ketol-acid reduction of (S)-2-acetolactate (S2AL) to yield (R)-2,3-dihydroxy-isovalerate. In the isomerase reaction, S2AL is rearranged via a Mg-dependent methyl migration to produce 3-hydroxy-3-methyl-2-ketobutyrate (HMKB). In the reductase reaction, this 2-ketoacid undergoes a metal-dependent reduction by NADPH to yield (R)-2,3-dihydroxy-isovalerate. This is Ketol-acid reductoisomerase (NADP(+)) from Pseudarthrobacter chlorophenolicus (strain ATCC 700700 / DSM 12829 / CIP 107037 / JCM 12360 / KCTC 9906 / NCIMB 13794 / A6) (Arthrobacter chlorophenolicus).